Here is a 309-residue protein sequence, read N- to C-terminus: Homoserine O-succinyltransferase (309 aa).

The active-site Acyl-thioester intermediate is the Cys-142. Residues Lys-163 and Ser-192 each coordinate substrate. His-235 acts as the Proton acceptor in catalysis. The active site involves Glu-237. Arg-249 is a binding site for substrate.

It belongs to the MetA family.

It is found in the cytoplasm. It catalyses the reaction L-homoserine + succinyl-CoA = O-succinyl-L-homoserine + CoA. The protein operates within amino-acid biosynthesis; L-methionine biosynthesis via de novo pathway; O-succinyl-L-homoserine from L-homoserine: step 1/1. In terms of biological role, transfers a succinyl group from succinyl-CoA to L-homoserine, forming succinyl-L-homoserine. In Serratia proteamaculans (strain 568), this protein is Homoserine O-succinyltransferase.